Reading from the N-terminus, the 304-residue chain is tRNA-uridine aminocarboxypropyltransferase 1 (304 aa).

Ser2 carries the N-acetylserine modification. A DXTW motif is present at residues Asp206–Trp209.

The protein belongs to the TDD superfamily. DTWD1 family.

It is found in the nucleus. The enzyme catalyses a uridine in tRNA + S-adenosyl-L-methionine = a 3-[(3S)-3-amino-3-carboxypropyl]uridine in tRNA + S-methyl-5'-thioadenosine + H(+). In terms of biological role, catalyzes the formation of 3-(3-amino-3-carboxypropyl)uridine (acp3U) at position 20 in the D-loop of several cytoplasmic tRNAs (acp3U(20)). The sequence is that of tRNA-uridine aminocarboxypropyltransferase 1 from Homo sapiens (Human).